The primary structure comprises 330 residues: Putative [LysW]-L-2-aminoadipate/[LysW]-L-glutamate phosphate reductase (330 aa).

NADP(+)-binding positions include 10–13 (SGYI) and 34–36 (SRR). The active site involves C142. NADP(+) is bound at residue N297.

The protein belongs to the NAGSA dehydrogenase family. Type 1 subfamily. LysY sub-subfamily.

The protein resides in the cytoplasm. The catalysed reaction is [amino-group carrier protein]-C-terminal-N-(1-carboxy-5-oxopentan-1-yl)-L-glutamine + phosphate + NADP(+) = [amino-group carrier protein]-C-terminal-N-(1-carboxy-5-phosphooxy-5-oxopentan-1-yl)-L-glutamine + NADPH + H(+). It catalyses the reaction [amino-group carrier protein]-C-terminal-gamma-(L-glutamyl-5-semialdehyde)-L-glutamate + phosphate + NADP(+) = [amino-group carrier protein]-C-terminal-gamma-(5-phospho-L-glutamyl)-L-glutamate + NADPH + H(+). Its pathway is amino-acid biosynthesis; L-lysine biosynthesis via AAA pathway; L-lysine from L-alpha-aminoadipate (Thermus route): step 3/5. The protein operates within amino-acid biosynthesis; L-arginine biosynthesis. Involved in both the arginine and lysine biosynthetic pathways. The sequence is that of Putative [LysW]-L-2-aminoadipate/[LysW]-L-glutamate phosphate reductase from Thermococcus kodakarensis (strain ATCC BAA-918 / JCM 12380 / KOD1) (Pyrococcus kodakaraensis (strain KOD1)).